The sequence spans 359 residues: AA9 family lytic polysaccharide monooxygenase B (359 aa).

A signal peptide spans 1-18 (MQLFTSFSLLAVASFASA). The Cu(2+) site is built by histidine 19 and histidine 102. 2 disulfide bridges follow: cysteine 72–cysteine 190 and cysteine 113–cysteine 117. A glycan (N-linked (GlcNAc...) asparagine) is linked at asparagine 150. O2 contacts are provided by histidine 176 and glutamine 185. Residue tyrosine 187 participates in Cu(2+) binding. The segment at 241–310 (GGSPGNSAEP…STNINPTSLK (70 aa)) is disordered. Positions 245–254 (GNSAEPQPQH) are enriched in polar residues. The span at 255–304 (TSTAVSTAKTASTSSLTTSVTITSQAPSNTANPPQSITTTTTPKPQSTNI) shows a compositional bias: low complexity. An N-linked (GlcNAc...) asparagine glycan is attached at asparagine 345.

Belongs to the polysaccharide monooxygenase AA9 family. It depends on Cu(2+) as a cofactor.

Its subcellular location is the secreted. It catalyses the reaction [(1-&gt;4)-beta-D-glucosyl]n+m + reduced acceptor + O2 = 4-dehydro-beta-D-glucosyl-[(1-&gt;4)-beta-D-glucosyl]n-1 + [(1-&gt;4)-beta-D-glucosyl]m + acceptor + H2O.. Its function is as follows. Lytic polysaccharide monooxygenase (LPMO) that depolymerizes crystalline and amorphous polysaccharides via the oxidation of scissile alpha- or beta-(1-4)-glycosidic bonds, yielding C1 and C4 oxidation products. Catalysis by LPMOs requires the reduction of the active-site copper from Cu(II) to Cu(I) by a reducing agent and H(2)O(2) or O(2) as a cosubstrate. Active on cellulose and on xyloglucan for deconstruction of plant biomass. The polypeptide is AA9 family lytic polysaccharide monooxygenase B (Geotrichum candidum (Oospora lactis)).